A 151-amino-acid polypeptide reads, in one-letter code: Ribosome maturation factor RimP (151 aa).

Belongs to the RimP family.

It localises to the cytoplasm. Functionally, required for maturation of 30S ribosomal subunits. The chain is Ribosome maturation factor RimP from Vibrio vulnificus (strain CMCP6).